Consider the following 173-residue polypeptide: NADH-ubiquinone oxidoreductase chain 6 (173 aa).

A run of 5 helical transmembrane segments spans residues 1–21 (MTYI…AVAS), 27–47 (FAAL…VGYG), 53–73 (LVLF…SAAL), 86–106 (SVLG…GWFW), and 139–159 (YGGG…FVVL).

This sequence belongs to the complex I subunit 6 family.

It localises to the mitochondrion membrane. It carries out the reaction a ubiquinone + NADH + 5 H(+)(in) = a ubiquinol + NAD(+) + 4 H(+)(out). Core subunit of the mitochondrial membrane respiratory chain NADH dehydrogenase (Complex I) that is believed to belong to the minimal assembly required for catalysis. Complex I functions in the transfer of electrons from NADH to the respiratory chain. The immediate electron acceptor for the enzyme is believed to be ubiquinone. This Salmo salar (Atlantic salmon) protein is NADH-ubiquinone oxidoreductase chain 6 (MT-ND6).